Reading from the N-terminus, the 300-residue chain is UPF0282 protein TON_1363 (300 aa).

The protein belongs to the UPF0282 family.

This chain is UPF0282 protein TON_1363, found in Thermococcus onnurineus (strain NA1).